Consider the following 258-residue polypeptide: Triosephosphate isomerase (258 aa).

11 to 13 (NWK) is a binding site for substrate. His101 functions as the Electrophile in the catalytic mechanism. Glu173 serves as the catalytic Proton acceptor. Substrate is bound by residues Gly179, Ser219, and 240 to 241 (GG).

Belongs to the triosephosphate isomerase family. In terms of assembly, homodimer.

It is found in the cytoplasm. It carries out the reaction D-glyceraldehyde 3-phosphate = dihydroxyacetone phosphate. It functions in the pathway carbohydrate biosynthesis; gluconeogenesis. It participates in carbohydrate degradation; glycolysis; D-glyceraldehyde 3-phosphate from glycerone phosphate: step 1/1. Involved in the gluconeogenesis. Catalyzes stereospecifically the conversion of dihydroxyacetone phosphate (DHAP) to D-glyceraldehyde-3-phosphate (G3P). This chain is Triosephosphate isomerase, found in Streptomyces coelicolor (strain ATCC BAA-471 / A3(2) / M145).